A 429-amino-acid chain; its full sequence is Adenylosuccinate synthetase (429 aa).

GTP is bound by residues 12-18 (GDEGKGK) and 40-42 (GHT). Residue aspartate 13 is the Proton acceptor of the active site. Residues aspartate 13 and glycine 40 each coordinate Mg(2+). IMP is bound by residues 13 to 16 (DEGK), 38 to 41 (NAGH), threonine 129, arginine 143, glutamine 223, threonine 238, and arginine 302. Histidine 41 acts as the Proton donor in catalysis. Residue 298 to 304 (TVTGRPR) participates in substrate binding. GTP contacts are provided by residues arginine 304, 330-332 (KLD), and 412-414 (STS).

The protein belongs to the adenylosuccinate synthetase family. Homodimer. Mg(2+) is required as a cofactor.

It localises to the cytoplasm. It carries out the reaction IMP + L-aspartate + GTP = N(6)-(1,2-dicarboxyethyl)-AMP + GDP + phosphate + 2 H(+). It functions in the pathway purine metabolism; AMP biosynthesis via de novo pathway; AMP from IMP: step 1/2. In terms of biological role, plays an important role in the de novo pathway of purine nucleotide biosynthesis. Catalyzes the first committed step in the biosynthesis of AMP from IMP. The polypeptide is Adenylosuccinate synthetase (Gluconobacter oxydans (strain 621H) (Gluconobacter suboxydans)).